A 1177-amino-acid polypeptide reads, in one-letter code: Lysylphosphatidylglycerol biosynthesis bifunctional protein LysX (1177 aa).

2 disordered regions span residues 1–40 (MRRA…AKFV) and 61–85 (VTLA…PANR). The interval 1–676 (MRRAGRSRQF…LLHHDGSAPD (676 aa)) is phosphatidylglycerol lysyltransferase. Positions 8 to 21 (RQFSSVEEAFSTSA) are enriched in polar residues. The span at 65 to 82 (SPGSRSGSGPRSGPRLGP) shows a compositional bias: low complexity. Helical transmembrane passes span 93 to 113 (VPAA…LGSV), 135 to 155 (FPDT…ALTA), 159 to 179 (IAWL…VADI), 189 to 209 (IFGE…LVLA), 227 to 247 (AVLV…VELF), and 281 to 301 (VFLN…ATIV). Residues 673–693 (SAPDVSGLRPERTDAEEARSR) form a disordered region. The segment at 677-1177 (VSGLRPERTD…TLPFPLAKPH (501 aa)) is lysine--tRNA ligase. Over residues 681-693 (RPERTDAEEARSR) the composition is skewed to basic and acidic residues. Residues Asp1089 and Glu1096 each contribute to the Mg(2+) site.

The protein in the N-terminal section; belongs to the LPG synthetase family. It in the C-terminal section; belongs to the class-II aminoacyl-tRNA synthetase family. Requires Mg(2+) as cofactor.

The protein resides in the cell membrane. The enzyme catalyses tRNA(Lys) + L-lysine + ATP = L-lysyl-tRNA(Lys) + AMP + diphosphate. The catalysed reaction is L-lysyl-tRNA(Lys) + a 1,2-diacyl-sn-glycero-3-phospho-(1'-sn-glycerol) = a 1,2-diacyl-sn-glycero-3-phospho-1'-(3'-O-L-lysyl)-sn-glycerol + tRNA(Lys). Functionally, catalyzes the production of L-lysyl-tRNA(Lys)transfer and the transfer of a lysyl group from L-lysyl-tRNA(Lys) to membrane-bound phosphatidylglycerol (PG), which produces lysylphosphatidylglycerol (LPG), one of the components of the bacterial membrane with a positive net charge. LPG synthesis contributes to the resistance to cationic antimicrobial peptides (CAMPs) and likely protects M.tuberculosis against the CAMPs produced by competiting microorganisms (bacteriocins). In fact, the modification of anionic phosphatidylglycerol with positively charged L-lysine results in repulsion of the peptides. In Mycobacterium avium (strain 104), this protein is Lysylphosphatidylglycerol biosynthesis bifunctional protein LysX (lysX).